We begin with the raw amino-acid sequence, 488 residues long: Annexin A7 (488 aa).

Pro residues predominate over residues 1–18; it reads MSYPGYPPTGYPPFPGYP. Disordered regions lie at residues 1 to 49 and 71 to 143; these read MSYP…YPQV and GYPG…PTYP. Positions 1 to 143 are repeat-rich region; that stretch reads MSYPGYPPTG…QYPGGQPTYP (143 aa). Residues 5-20 form a 3 X 5 AA tandem repeats of G-Y-P-P-X region; the sequence is GYPPTGYPPFPGYPPA. Residues 89-102 show a composition bias toward gly residues; the sequence is PGQGFGVPPGGAGF. Annexin repeat units follow at residues 185–256, 257–328, 340–412, and 416–487; these read FDAI…ALFM, PPTY…SMCQ, QMAQ…TILQ, and NRPA…AIVG. At Lys-233 the chain carries N6-acetyllysine.

Belongs to the annexin family. As to quaternary structure, interacts with PDCD6. Isoform 1 is expressed in brain, heart and skeletal muscle. Isoform 2 is more abundant in liver, lung, kidney, spleen, fibroblasts and placenta.

Functionally, calcium/phospholipid-binding protein which promotes membrane fusion and is involved in exocytosis. The chain is Annexin A7 (ANXA7) from Homo sapiens (Human).